Here is a 337-residue protein sequence, read N- to C-terminus: Anthranilate phosphoribosyltransferase (337 aa).

5-phospho-alpha-D-ribose 1-diphosphate-binding positions include Gly-81, 84–85, Ser-89, 91–94, 109–117, and Ala-121; these read GD, NVST, and KHGNRALSS. Gly-81 contacts anthranilate. Residue Ser-93 coordinates Mg(2+). An anthranilate-binding site is contributed by Asn-112. An anthranilate-binding site is contributed by Arg-167. Residues Asp-226 and Glu-227 each coordinate Mg(2+).

This sequence belongs to the anthranilate phosphoribosyltransferase family. In terms of assembly, homodimer. Mg(2+) serves as cofactor.

The enzyme catalyses N-(5-phospho-beta-D-ribosyl)anthranilate + diphosphate = 5-phospho-alpha-D-ribose 1-diphosphate + anthranilate. The protein operates within amino-acid biosynthesis; L-tryptophan biosynthesis; L-tryptophan from chorismate: step 2/5. Its function is as follows. Catalyzes the transfer of the phosphoribosyl group of 5-phosphorylribose-1-pyrophosphate (PRPP) to anthranilate to yield N-(5'-phosphoribosyl)-anthranilate (PRA). In Nitrobacter hamburgensis (strain DSM 10229 / NCIMB 13809 / X14), this protein is Anthranilate phosphoribosyltransferase.